Reading from the N-terminus, the 350-residue chain is Cytosolic Fe-S cluster assembly factor NBP35 (350 aa).

Residues 1 to 30 (MENGDIPEDANEHCPGPQSESAGKSDSCAG) form a disordered region. Residues Cys14, Cys28, Cys31, and Cys37 each coordinate [4Fe-4S] cluster. 67–74 (GKGGVGKS) contributes to the ATP binding site.

This sequence belongs to the Mrp/NBP35 ATP-binding proteins family. NUBP1/NBP35 subfamily. In terms of assembly, homodimer and homotetramer. Predominantly homodimeric. It depends on [4Fe-4S] cluster as a cofactor.

It is found in the cytoplasm. Component of the cytosolic iron-sulfur (Fe-S) protein assembly (CIA) machinery. Required for maturation of extramitochondrial Fe-S proteins. Functions as a Fe-S scaffold, mediating the de novo assembly of an Fe-S cluster and its transfer to target apoproteins. Essential for embryo development. This is Cytosolic Fe-S cluster assembly factor NBP35 from Arabidopsis thaliana (Mouse-ear cress).